A 289-amino-acid chain; its full sequence is Protease HtpX (289 aa).

Helical transmembrane passes span 4 to 24 and 36 to 56; these read IMLF…VLNI and LSGL…ISLM. Residue histidine 143 coordinates Zn(2+). Residue glutamate 144 is part of the active site. Position 147 (histidine 147) interacts with Zn(2+). 2 helical membrane passes run 158-178 and 192-212; these read LMQG…ANIV and MVYF…ASFL. Glutamate 221 contributes to the Zn(2+) binding site.

The protein belongs to the peptidase M48B family. Zn(2+) is required as a cofactor.

Its subcellular location is the cell inner membrane. The polypeptide is Protease HtpX (Vibrio campbellii (strain ATCC BAA-1116)).